Here is a 635-residue protein sequence, read N- to C-terminus: Cationic amino acid transporter 4 (635 aa).

Helical transmembrane passes span 42-62 (LTLL…TGTV), 66-86 (MAGP…LLAA), and 113-133 (IWAF…GAAV). N-linked (GlcNAc...) asparagine glycosylation is found at asparagine 146, asparagine 151, and asparagine 195. A helical transmembrane segment spans residues 197-217 (TFSAISLIVILFIIVLGFILA). N-linked (GlcNAc...) asparagine glycosylation occurs at asparagine 221. Helical transmembrane passes span 229–249 (FAPF…YAFV), 270–290 (MAIA…STVL), 318–338 (GFIV…SNLF), 365–385 (QVPV…ALLL), and 391–411 (VQFL…SIIV). Phosphoserine is present on residues serine 422 and serine 427. A run of 4 helical transmembrane segments spans residues 478 to 498 (VAWA…VLVF), 508 to 528 (WGYV…LLVL), 539 to 559 (TFQI…NTCL), and 567 to 587 (TWLR…GYGI).

It belongs to the amino acid-polyamine-organocation (APC) superfamily. Cationic amino acid transporter (CAT) (TC 2.A.3.3) family.

It is found in the membrane. Its function is as follows. Involved in the transport of the cationic amino acids (arginine, lysine and ornithine). This is Cationic amino acid transporter 4 (Slc7a4) from Mus musculus (Mouse).